The sequence spans 287 residues: Ribosomal RNA small subunit methyltransferase A (287 aa).

Asn28, Leu30, Gly55, Glu77, Asp103, and Asn123 together coordinate S-adenosyl-L-methionine.

It belongs to the class I-like SAM-binding methyltransferase superfamily. rRNA adenine N(6)-methyltransferase family. RsmA subfamily.

The protein resides in the cytoplasm. The enzyme catalyses adenosine(1518)/adenosine(1519) in 16S rRNA + 4 S-adenosyl-L-methionine = N(6)-dimethyladenosine(1518)/N(6)-dimethyladenosine(1519) in 16S rRNA + 4 S-adenosyl-L-homocysteine + 4 H(+). Specifically dimethylates two adjacent adenosines (A1518 and A1519) in the loop of a conserved hairpin near the 3'-end of 16S rRNA in the 30S particle. May play a critical role in biogenesis of 30S subunits. The sequence is that of Ribosomal RNA small subunit methyltransferase A from Rhodopseudomonas palustris (strain BisB5).